The primary structure comprises 178 residues: Phosphopantetheine adenylyltransferase (178 aa).

Residue Thr17 coordinates substrate. ATP is bound by residues 17 to 18 and His25; that span reads TF. Residues Lys49, Leu86, and Arg100 each contribute to the substrate site. ATP-binding positions include 101 to 103, Glu111, and 136 to 142; these read GLR and LQPVASR.

The protein belongs to the bacterial CoaD family. Homohexamer. It depends on Mg(2+) as a cofactor.

Its subcellular location is the cytoplasm. It carries out the reaction (R)-4'-phosphopantetheine + ATP + H(+) = 3'-dephospho-CoA + diphosphate. The protein operates within cofactor biosynthesis; coenzyme A biosynthesis; CoA from (R)-pantothenate: step 4/5. In terms of biological role, reversibly transfers an adenylyl group from ATP to 4'-phosphopantetheine, yielding dephospho-CoA (dPCoA) and pyrophosphate. This Zymomonas mobilis subsp. mobilis (strain ATCC 31821 / ZM4 / CP4) protein is Phosphopantetheine adenylyltransferase.